The chain runs to 263 residues: Izumo sperm-egg fusion protein 3 (263 aa).

The signal sequence occupies residues 1-22 (MGDLWVLLFSSLSLAAFHGVRG). Residues 23-176 (CLECDPKFTE…EDPKTAENRE (154 aa)) lie on the Extracellular side of the membrane. N-linked (GlcNAc...) asparagine glycosylation is found at N98 and N128. Residues 177–197 (ISLYLIFIAEAVILASAVLLF) traverse the membrane as a helical segment. Residues 198–263 (HVCISHRRKM…CAESEMQTGT (66 aa)) are Cytoplasmic-facing. Residues 241 to 263 (GRSNSNSLTGEPTCAESEMQTGT) are disordered.

The protein belongs to the Izumo family. Monomer and homodimer. In terms of tissue distribution, sperm-specific (at protein level).

It is found in the cell membrane. It localises to the cytoplasmic vesicle. The protein localises to the secretory vesicle. Its subcellular location is the acrosome inner membrane. Its function is as follows. Plays an important role in the biogenesis of the acrosome during sperm development. This Mus musculus (Mouse) protein is Izumo sperm-egg fusion protein 3 (Izumo3).